We begin with the raw amino-acid sequence, 1062 residues long: Valine--tRNA ligase, mitochondrial (1062 aa).

A mitochondrion-targeting transit peptide spans methionine 1–glycine 15. Positions methionine 1–threonine 73 are disordered. A compositionally biased stretch (basic and acidic residues) spans arginine 42–alanine 56. Residues proline 146 to histidine 156 carry the 'HIGH' region motif. Residues lysine 659–serine 663 carry the 'KMSKS' region motif. Lysine 662 contributes to the ATP binding site.

This sequence belongs to the class-I aminoacyl-tRNA synthetase family.

The protein resides in the mitochondrion. The catalysed reaction is tRNA(Val) + L-valine + ATP = L-valyl-tRNA(Val) + AMP + diphosphate. Catalyzes the attachment of valine to tRNA(Val) in a two-step reaction: valine is first activated by ATP to form Val-AMP and then transferred to the acceptor end of tRNA(Val). This chain is Valine--tRNA ligase, mitochondrial (VARS2), found in Sus scrofa (Pig).